A 109-amino-acid polypeptide reads, in one-letter code: Small ribosomal subunit protein bS20 (109 aa).

Belongs to the bacterial ribosomal protein bS20 family.

Functionally, binds directly to 16S ribosomal RNA. The sequence is that of Small ribosomal subunit protein bS20 from Synechococcus sp. (strain JA-2-3B'a(2-13)) (Cyanobacteria bacterium Yellowstone B-Prime).